Reading from the N-terminus, the 209-residue chain is MKYNHTVDYGLYLVSDRDVLKGRDFIKSLEEAILGGATIVQLREKEASSLEFYQLALKAKALTEKYNVPLIINDRVDIALAVDADGVHVGQSDLPAHIVRSMIGQNKILGVSTATLEESKKAAEDGADYIGVGALFPTGTKTDANPVTLDQLRYIKENMDIPVVGIGGICEDNIKTIMEVGIDGVAIVSAILGKENIKEAAESLKASIK.

4-amino-2-methyl-5-(diphosphooxymethyl)pyrimidine is bound by residues 41–45 (QLREK) and Asn-73. Mg(2+) is bound by residues Asp-74 and Asp-93. Ser-112 is a 4-amino-2-methyl-5-(diphosphooxymethyl)pyrimidine binding site. 138–140 (TGT) serves as a coordination point for 2-[(2R,5Z)-2-carboxy-4-methylthiazol-5(2H)-ylidene]ethyl phosphate. Position 141 (Lys-141) interacts with 4-amino-2-methyl-5-(diphosphooxymethyl)pyrimidine. 2-[(2R,5Z)-2-carboxy-4-methylthiazol-5(2H)-ylidene]ethyl phosphate contacts are provided by residues Gly-168 and 188–189 (VS).

It belongs to the thiamine-phosphate synthase family. Mg(2+) is required as a cofactor.

It carries out the reaction 2-[(2R,5Z)-2-carboxy-4-methylthiazol-5(2H)-ylidene]ethyl phosphate + 4-amino-2-methyl-5-(diphosphooxymethyl)pyrimidine + 2 H(+) = thiamine phosphate + CO2 + diphosphate. It catalyses the reaction 2-(2-carboxy-4-methylthiazol-5-yl)ethyl phosphate + 4-amino-2-methyl-5-(diphosphooxymethyl)pyrimidine + 2 H(+) = thiamine phosphate + CO2 + diphosphate. The enzyme catalyses 4-methyl-5-(2-phosphooxyethyl)-thiazole + 4-amino-2-methyl-5-(diphosphooxymethyl)pyrimidine + H(+) = thiamine phosphate + diphosphate. It functions in the pathway cofactor biosynthesis; thiamine diphosphate biosynthesis; thiamine phosphate from 4-amino-2-methyl-5-diphosphomethylpyrimidine and 4-methyl-5-(2-phosphoethyl)-thiazole: step 1/1. Functionally, condenses 4-methyl-5-(beta-hydroxyethyl)thiazole monophosphate (THZ-P) and 2-methyl-4-amino-5-hydroxymethyl pyrimidine pyrophosphate (HMP-PP) to form thiamine monophosphate (TMP). The chain is Thiamine-phosphate synthase from Alkaliphilus oremlandii (strain OhILAs) (Clostridium oremlandii (strain OhILAs)).